The following is a 175-amino-acid chain: uncharacterized protein (175 aa).

Residues methionine 1–glutamate 2 are Extracellular-facing. A helical membrane pass occupies residues serine 3 to glycine 23. The Cytoplasmic segment spans residues serine 24–arginine 151. Residues serine 26–isoleucine 88 are disordered. A compositionally biased stretch (polar residues) spans phenylalanine 59 to proline 78. A helical transmembrane segment spans residues valine 152 to glutamate 172. Residues alanine 173–arginine 175 lie on the Extracellular side of the membrane.

The protein resides in the membrane. This is an uncharacterized protein from Saccharomyces cerevisiae (strain ATCC 204508 / S288c) (Baker's yeast).